A 2198-amino-acid chain; its full sequence is Activating signal cointegrator 1 complex subunit 3 (2198 aa).

The residue at position 12 (serine 12) is a Phosphoserine. Coiled-coil stretches lie at residues 18-81 and 328-356; these read KQDN…KQIV and IQSE…KAGE. Positions 487–670 constitute a Helicase ATP-binding 1 domain; the sequence is ETAYNTNENM…FLHVNPYIGL (184 aa). Residue 500–507 coordinates ATP; the sequence is APTGAGKT. Position 573 is an N6-acetyllysine (lysine 573). The DEVH box motif lies at 612-615; it reads DEVH. The Helicase C-terminal 1 domain maps to 697 to 915; the sequence is QLNNMDEVCY…GTVTNVEEAV (219 aa). The SEC63 1 domain occupies 979–1288; that stretch reads STDLGRTASH…GAEAVCIINF (310 aa). One can recognise a Helicase ATP-binding 2 domain in the interval 1337–1512; sequence HTLYHTDCNV…WLNIKQMGLF (176 aa). ATP is bound at residue 1350–1357; the sequence is APTGSGKT. A DEIH box motif is present at residues 1454-1457; the sequence is DEIH. The Helicase C-terminal 2 domain maps to 1545-1740; sequence PAFQAIRSHS…VLSDHLNAEI (196 aa). The 365-residue stretch at 1813 to 2177 folds into the SEC63 2 domain; sequence PLTCGRIASY…LGLDQQYDIY (365 aa).

The protein belongs to the helicase family. Identified in the ASCC complex that contains ASCC1, ASCC2 and ASCC3. Functions as a scaffolding subunit that interacts directly with both ASCC1 and ASCC2. Interacts directly with ALKBH3, and thereby recruits ALKBH3 to the ASCC complex. Part of the ASC-1/TRIP4 complex, that contains TRIP4, ASCC1, ASCC2 and ASCC3. Part of the RQT (ribosome quality control trigger) complex, that contains ASCC2, ASCC3 and TRIP4. Associates with ribosomes; recruited to collided ribosomes. Interacts with ZCCHC4. Interacts with ZNF598. Interacts with RPS3.

Its subcellular location is the nucleus. It is found in the nucleus speckle. The protein resides in the cytoplasm. It localises to the cytosol. It carries out the reaction Couples ATP hydrolysis with the unwinding of duplex DNA by translocating in the 3'-5' direction.. It catalyses the reaction ATP + H2O = ADP + phosphate + H(+). Functionally, ATPase involved both in DNA repair and rescue of stalled ribosomes. 3'-5' DNA helicase involved in repair of alkylated DNA: promotes DNA unwinding to generate single-stranded substrate needed for ALKBH3, enabling ALKBH3 to process alkylated N3-methylcytosine (3mC) within double-stranded regions. Also involved in activation of the ribosome quality control (RQC) pathway, a pathway that degrades nascent peptide chains during problematic translation. Drives the splitting of stalled ribosomes that are ubiquitinated in a ZNF598-dependent manner, as part of the ribosome quality control trigger (RQT) complex. Part of the ASC-1 complex that enhances NF-kappa-B, SRF and AP1 transactivation. The sequence is that of Activating signal cointegrator 1 complex subunit 3 (Ascc3) from Mus musculus (Mouse).